The following is a 270-amino-acid chain: Putative hydro-lyase Noca_0093 (270 aa).

The protein belongs to the D-glutamate cyclase family.

This is Putative hydro-lyase Noca_0093 from Nocardioides sp. (strain ATCC BAA-499 / JS614).